The chain runs to 347 residues: Protein XRP2 (347 aa).

Positions 1–11 (MGCCFTKRRKS) are enriched in basic residues. The interval 1-22 (MGCCFTKRRKSEKAEGEEEQPK) is disordered. Gly2 carries N-myristoyl glycine lipidation. The S-palmitoyl cysteine moiety is linked to residue Cys3. Residues 21–176 (PKLYSWDQRE…IWSHVHDFTP (156 aa)) form the C-CAP/cofactor C-like domain. Residues 95–96 (GS) and 112–115 (QQFR) contribute to the GTP site.

This sequence belongs to the TBCC family. Found in a complex with ARL3, RP2 and UNC119 (or UNC119B); RP2 induces hydrolysis of GTP ARL3 in the complex, leading to the release of UNC119 (or UNC119B). Interacts with ARL3; interaction is direct and stimulated with the activated GTP-bound form of ARL3. In terms of processing, myristoylated on Gly-2; which may be required for membrane targeting. Post-translationally, palmitoylated on Cys-3; which may be required for plasma membrane targeting. In terms of tissue distribution, retina (at protein level).

Its subcellular location is the cell membrane. It localises to the cell projection. The protein resides in the cilium. Functionally, acts as a GTPase-activating protein (GAP) involved in trafficking between the Golgi and the ciliary membrane. Involved in localization of proteins, such as NPHP3, to the cilium membrane by inducing hydrolysis of GTP ARL3, leading to the release of UNC119 (or UNC119B). Acts as a GTPase-activating protein (GAP) for tubulin in concert with tubulin-specific chaperone C, but does not enhance tubulin heterodimerization. Acts as a guanine nucleotide dissociation inhibitor towards ADP-ribosylation factor-like proteins. The chain is Protein XRP2 (Rp2) from Mus musculus (Mouse).